The primary structure comprises 406 residues: LIM/homeobox protein Lhx1 (406 aa).

LIM zinc-binding domains follow at residues 4 to 54 (CAGC…CKND) and 63 to 117 (CAGC…CKED). 2 disordered regions span residues 128–189 (NSLH…TIKA) and 294–372 (DFFP…SAEV). The span at 137-148 (SDPSLSPDSQDP) shows a compositional bias: low complexity. A compositionally biased stretch (basic and acidic residues) spans 151–167 (DDAKDSESANVSDKEGG). Ser162 carries the phosphoserine modification. The homeobox DNA-binding region spans 180-239 (RRGPRTTIKAKQLETLKAAFAATPKPTRHIREQLAQETGLNMRVIQVWFQNRRSKERRMK). A compositionally biased stretch (low complexity) spans 315–327 (PSSGPSGTPLGGL). The segment covering 352–362 (GDSPSPEPSLP) has biased composition (pro residues).

As to quaternary structure, interacts with LDB1 via the tandem LIM domains.

It is found in the nucleus. Potential transcription factor. May play a role in early mesoderm formation and later in lateral mesoderm differentiation and neurogenesis. The sequence is that of LIM/homeobox protein Lhx1 (Lhx1) from Mesocricetus auratus (Golden hamster).